A 310-amino-acid chain; its full sequence is Cytosolic Fe-S cluster assembly factor Nubp1 homolog (310 aa).

Positions 9, 23, 26, and 32 each coordinate [4Fe-4S] cluster. 63-70 is a binding site for ATP; it reads GKGGVGKS. The [4Fe-4S] cluster site is built by Cys-240 and Cys-243.

This sequence belongs to the Mrp/NBP35 ATP-binding proteins family. NUBP1/NBP35 subfamily. As to quaternary structure, heterotetramer of 2 Nubp1 and 2 Nubp2 chains. [4Fe-4S] cluster is required as a cofactor.

Its subcellular location is the cytoplasm. Functionally, component of the cytosolic iron-sulfur (Fe/S) protein assembly (CIA) machinery. Required for maturation of extramitochondrial Fe-S proteins. The Nubp1-Nubp2 heterotetramer forms a Fe-S scaffold complex, mediating the de novo assembly of an Fe-S cluster and its transfer to target apoproteins. This chain is Cytosolic Fe-S cluster assembly factor Nubp1 homolog, found in Drosophila virilis (Fruit fly).